We begin with the raw amino-acid sequence, 495 residues long: Serine/threonine protein phosphatase 2A 57 kDa regulatory subunit B' alpha isoform (495 aa).

Residues M1–A13 are compositionally biased toward basic residues. Disordered regions lie at residues M1–T61 and Q462–S495. Over residues V49–T61 the composition is skewed to polar residues.

The protein belongs to the phosphatase 2A regulatory subunit B56 family. In terms of assembly, PP2A consists of a common heteromeric enzyme, composed of a catalytic subunit (subunits C), a constant regulatory subunit (subunit A), and a variety of regulatory subunits such as subunits B (the R2/B/PR55/B55, R3/B''/PR72/PR130/PR59 and R5/B'/B56 families). Interacts with BZR1. Interacts with BRI1. Interacts with SRK2E/OST1. As to expression, expressed ubiquitously, higher levels in leaves.

It localises to the nucleus. It is found in the cytoplasm. Functionally, the B regulatory subunit may modulate substrate selectivity and catalytic activity, and may also direct the localization of the catalytic enzyme to a particular subcellular compartment. Required for the formation of the PP2A holoenzyme that positively regulates brassinosteroid signaling by dephosphorylating and activating BZR1. The sequence is that of Serine/threonine protein phosphatase 2A 57 kDa regulatory subunit B' alpha isoform (B'ALPHA) from Arabidopsis thaliana (Mouse-ear cress).